The primary structure comprises 544 residues: Methionine--tRNA ligase 2 (544 aa).

A 'HIGH' region motif is present at residues proline 10 to histidine 20. 4 residues coordinate Zn(2+): cysteine 141, cysteine 144, cysteine 153, and cysteine 156. The short motif at lysine 329 to serine 333 is the 'KMSKS' region element. Position 332 (threonine 332) interacts with ATP.

This sequence belongs to the class-I aminoacyl-tRNA synthetase family. MetG type 1 subfamily. As to quaternary structure, monomer. The cofactor is Zn(2+).

The protein resides in the cytoplasm. The enzyme catalyses tRNA(Met) + L-methionine + ATP = L-methionyl-tRNA(Met) + AMP + diphosphate. Its function is as follows. Is required not only for elongation of protein synthesis but also for the initiation of all mRNA translation through initiator tRNA(fMet) aminoacylation. The protein is Methionine--tRNA ligase 2 of Bacillus anthracis.